The chain runs to 1727 residues: MAAFFPPSSAELRKVKRVQFGILSPDEIRNMSVARVEHPETYENGKPKAGGLLDPAMGTIDKTQRCQTCSGTMAECPGHFGHIELAKPVFHIGFIDTVLKILRCVCYHCSKLLTDTNEHSFRQALKIRNQKHRLNAVVDCCKNKKVCAIGGEEEEEHDLSKTDEELDKPVKHGGCGNVLPKITKEDLKIIVEFKDVTDESIEKKSVLSAERVLNILKRIKDEDSRAMGINPDWARADWMIATVLPVPPPPVRPSIMMDTSTRGEDDLTHKLADIVKANRELQRQEKNGAPAHIIAEATQFLQFHVATYVDNEIPGLPQAQQRSGRPLKSIRQRLKGKEGRIRGNLMGKRVDFSARTVITADPNLSIDQVGVPRSIALNLTYPETVTPFNIDKMRELIRNGPSEHPGAKYIIREDGTRFDLRFVKKVSDTHLECGYKVERHINDGDVVIFNRQPSLHKMSMMGHRIKVMPYSTFRLNLSVTSPYNADFDGDEMNLHVPQTLETRAEVIEIMMVPRQIVSPQSNRPVMGIVQDTLLGSRLFTKRDCFMEKDLVMNILMWLPSWDGKVPPPAILKPKQLWTGKQLFSLIIPDINLIRFTSTHNDKEPNECSAGDTRVIIERGELLAGILCKRSLGAANGSIIHVVMNEHGHDTCRLFIDQTQTVVNHWLINRGFTMGIGDTIADSATMAKVTLTISSAKNQVKELIIKAQNKQFECQPGKSVIETFEQKVNQVLNKARDTAGSSAQDSLSEDNNLKAMVTAGSKGSFINISQMMACVGQQNVEGKRIPFGFQSRTLPHFTKDDYGPESRGFVENSYLRGLTPQEFFFHAMGGREGLIDTAVKTSETGYIQRRLVKAMEDVSIKYDATVRNSLGDVIQFAYGEDGIDGCFVENQSIDSLRKDNTELERMYRHQVDKPDYGDGWMDPLVIEHVRNDSLTRDTLEKEFERIKSDRSLLRNEIIPSGEANWPLPVNLRRLINNAQKLFNIDIRRVSDLNPAVVVLEIEKLVARLKIIATADTTEDDENFNRAWAEVYFNATMLFSILVRSTFASKRVLTEFRLTEKAFLWVCGEIESKFLQALAHPGEMVGALAAQSIGEPATQMTLNTFHYAGVSSKNVTLGVPRLKEIINIAKQVKTPSLTIYLKPHMARDMDRAKIVKSQLEYTTLANVTSATEIYYDPDPQNTIISEDAEFVNSYFELPDEEIDVHSMSPWLLRIELDRGMVTDKKLTMADITQCVVRDFGLSLNCIFSDDNAEKLILRIRMVESQETKGTDNDDDDQFLRRIESNMLSEMVLRGIKGIKKVFMRTDDKIPKVTENGGFGVREEWILDTDGVSLLEVMSHPDVDHTRTTSNDIVEIIQVLGIEAVRNALLKELRAVISFDGSYVNYRHLAILADVMTYRGHLMAITRHGINRVETGPLMRCSFEETVEILMDAAMFSETDDVKGVTENIILGQLPPLGTGSFEVFLNQDMIKNAHSIALPEPSNVSYPDTPGSQTPSYSYGDGSTTPFHNPYDAPLSPFNETFRGDFSPSAMNSPGYNANKSYGSSYQYFPQSPTYSPTSPSYSPTSPSYSPTSPSYSPTSPSYSPTSPSYSPTSPSYSPTSPFYSPTSPSYSPTSPSYSPTSPSYSPTSPSYSPTSPSYSPTSPSYSPTSPSYSPTSPSYSPTSPSYSPTSPSYSPTSPSYSPTSPSYSPSSPSYSPSSPSYSPSSPSYSPSSPTFTNKYNYQPNNKKK.

Zn(2+)-binding residues include Cys66, Cys69, Cys76, His79, Cys106, Cys109, Cys147, and Cys175. The Mg(2+) site is built by Asp486, Asp488, and Asp490. The tract at residues 819-831 is bridging helix; it reads PQEFFFHAMGGRE. A Glycyl lysine isopeptide (Lys-Gly) (interchain with G-Cter in ubiquitin) cross-link involves residue Lys1266. Disordered stretches follow at residues 1478-1512 and 1551-1727; these read EPSN…YDAP and PTYS…NKKK. The span at 1480-1505 shows a compositional bias: polar residues; it reads SNVSYPDTPGSQTPSYSYGDGSTTPF. Tandem repeats lie at residues 1553–1559, 1560–1566, 1567–1573, 1574–1580, 1581–1587, 1588–1594, 1595–1601, 1602–1608, 1609–1615, 1616–1622, 1623–1629, 1630–1636, 1637–1643, 1644–1650, 1651–1657, 1658–1664, 1665–1671, 1672–1678, 1679–1685, 1686–1692, 1693–1699, 1700–1706, and 1707–1713. Positions 1553–1713 are C-terminal domain (CTD); 23 X 7 AA tandem repeats of Y-S-P-[ST]-S-P-[FST]; it reads YSPTSPSYSP…SPSYSPSSPT (161 aa).

It belongs to the RNA polymerase beta' chain family. Component of the RNA polymerase II (Pol II) complex consisting of 12 subunits. Post-translationally, the tandem heptapeptide repeats in the C-terminal domain (CTD) can be highly phosphorylated. The phosphorylation activates Pol II. Phosphorylation occurs mainly at residues 'Ser-2' and 'Ser-5' of the heptapeptide repeat. The phosphorylation state is believed to result from the balanced action of site-specific CTD kinases and phosphatase, and a 'CTD code' that specifies the position of Pol II within the transcription cycle has been proposed. In terms of processing, following transcription stress, the elongating form of RNA polymerase II (RNA pol IIo) is polyubiquitinated via 'Lys-63'-linkages on Lys-1266 at DNA damage sites without leading to degradation: ubiquitination promotes RNA pol IIo backtracking to allow access by the transcription-coupled nucleotide excision repair (TC-NER) machinery. Subsequent DEF1-dependent polyubiquitination by the elongin complex via 'Lys-48'-linkages may lead to proteasome-mediated degradation; presumably at stalled RNA pol II where TC-NER has failed, to halt global transcription and enable 'last resort' DNA repair pathways.

It localises to the nucleus. It carries out the reaction RNA(n) + a ribonucleoside 5'-triphosphate = RNA(n+1) + diphosphate. DNA-dependent RNA polymerase catalyzes the transcription of DNA into RNA using the four ribonucleoside triphosphates as substrates. Largest and catalytic component of RNA polymerase II which synthesizes mRNA precursors and many functional non-coding RNAs. Forms the polymerase active center together with the second largest subunit. Pol II is the central component of the basal RNA polymerase II transcription machinery. It is composed of mobile elements that move relative to each other. RPB1 is part of the core element with the central large cleft, the clamp element that moves to open and close the cleft and the jaws that are thought to grab the incoming DNA template. At the start of transcription, a single-stranded DNA template strand of the promoter is positioned within the central active site cleft of Pol II. A bridging helix emanates from RPB1 and crosses the cleft near the catalytic site and is thought to promote translocation of Pol II by acting as a ratchet that moves the RNA-DNA hybrid through the active site by switching from straight to bent conformations at each step of nucleotide addition. During transcription elongation, Pol II moves on the template as the transcript elongates. Elongation is influenced by the phosphorylation status of the C-terminal domain (CTD) of Pol II largest subunit (RPB1), which serves as a platform for assembly of factors that regulate transcription initiation, elongation, termination and mRNA processing. The polypeptide is DNA-directed RNA polymerase II subunit rpb1 (polr2a) (Dictyostelium discoideum (Social amoeba)).